The chain runs to 161 residues: Cyclic pyranopterin monophosphate synthase (161 aa).

Substrate is bound by residues 75–77 and 113–114; these read LCH and ME. Residue D128 is part of the active site.

The protein belongs to the MoaC family. In terms of assembly, homohexamer; trimer of dimers.

The catalysed reaction is (8S)-3',8-cyclo-7,8-dihydroguanosine 5'-triphosphate = cyclic pyranopterin phosphate + diphosphate. The protein operates within cofactor biosynthesis; molybdopterin biosynthesis. Catalyzes the conversion of (8S)-3',8-cyclo-7,8-dihydroguanosine 5'-triphosphate to cyclic pyranopterin monophosphate (cPMP). This chain is Cyclic pyranopterin monophosphate synthase, found in Salmonella dublin (strain CT_02021853).